Consider the following 195-residue polypeptide: Cholesin (195 aa).

Positions 1-78 are disordered; that stretch reads MAKHKRKGLE…KEEKKRLREA (78 aa). Basic and acidic residues-rich tracts occupy residues 8-18 and 26-39; these read GLEGTGKESKR and ETPR…DKET. A phosphoserine mark is found at serine 41, serine 48, and serine 52. Positions 53-77 are enriched in basic and acidic residues; sequence PEERRVLERKLKKERKKEEKKRLRE. Serine 96 carries the post-translational modification Phosphoserine.

In terms of tissue distribution, secreted via exosomes, secreted from the instestine, secretion is induced by feeding and cholesterol absorption. Expressed in enterocytes.

Its subcellular location is the secreted. Its function is as follows. Hormone secreted from the intestine in response to cholesterol, where it acts to inhibit cholesterol synthesis in the liver and VLDL secretion,leading to a reduction in circulating cholesterol levels. Acts through binding to its receptor, GPR146. The polypeptide is Cholesin (Chlsn) (Mus musculus (Mouse)).